Consider the following 447-residue polypeptide: Multicopper oxidase mco (447 aa).

Over residues 1–25 the composition is skewed to basic and acidic residues; the sequence is MMDMKENDQKRNDMMDMKSHDERKN. Positions 1-43 are disordered; sequence MMDMKENDQKRNDMMDMKSHDERKNLNSSQGKNEITFPKVLDP. Cu cation-binding residues include His-107, His-109, His-147, His-149, His-375, His-378, His-380, His-428, Cys-429, His-430, His-434, and Met-439.

It belongs to the multicopper oxidase family. Cu cation is required as a cofactor.

It localises to the cytoplasm. In terms of biological role, may be involved in copper homeostasis and oxidative stress response. Oxidizes the substrate 3,3'-dimethoxybenzidine in vitro. Also possesses low levels of phenoloxidase and ferroxidase activities. The protein is Multicopper oxidase mco (mco) of Staphylococcus aureus.